We begin with the raw amino-acid sequence, 116 residues long: Large ribosomal subunit protein uL24 (116 aa).

A disordered region spans residues Met1 to Gly27.

The protein belongs to the universal ribosomal protein uL24 family. As to quaternary structure, part of the 50S ribosomal subunit.

Its function is as follows. One of two assembly initiator proteins, it binds directly to the 5'-end of the 23S rRNA, where it nucleates assembly of the 50S subunit. In terms of biological role, one of the proteins that surrounds the polypeptide exit tunnel on the outside of the subunit. The sequence is that of Large ribosomal subunit protein uL24 from Picosynechococcus sp. (strain ATCC 27264 / PCC 7002 / PR-6) (Agmenellum quadruplicatum).